A 291-amino-acid chain; its full sequence is Small ribosomal subunit protein uS2 (291 aa).

The segment covering 238–247 (DEESGDELDE) has biased composition (acidic residues). The segment at 238–291 (DEESGDELDESVSLHEEGREITDYENYTPPEEREYSVNDEGDVFDEDESLYEGR) is disordered. Positions 249 to 259 (VSLHEEGREIT) are enriched in basic and acidic residues. The span at 274-291 (VNDEGDVFDEDESLYEGR) shows a compositional bias: acidic residues.

Belongs to the universal ribosomal protein uS2 family.

The protein is Small ribosomal subunit protein uS2 (rpsB) of Treponema pallidum (strain Nichols).